We begin with the raw amino-acid sequence, 547 residues long: Solute carrier family 22 member 7 (547 aa).

The next 12 helical transmembrane spans lie at 21–41 (VALL…PIFL), 145–165 (ATST…GYLS), 173–193 (LLLV…ASVS), 203–223 (LTGT…LEWL), 233–253 (VLSS…GYLI), 258–278 (WLLL…WWVP), 345–365 (ISLC…GLSL), 374–396 (VYQT…YLSV), 403–423 (LTLA…LLVS), 431–451 (TALA…AYLF), 465–485 (MGLT…AALL), and 492–512 (LPKL…LLLP). Positions 521–547 (ETIQDVERKSAPSSLQEEEMPMKQVQD) are disordered.

Belongs to the major facilitator (TC 2.A.1) superfamily. Organic cation transporter (TC 2.A.1.19) family.

The protein localises to the basolateral cell membrane. Its subcellular location is the apical cell membrane. It localises to the cell membrane. The catalysed reaction is orotate(out) + L-glutamate(in) = orotate(in) + L-glutamate(out). The enzyme catalyses 3',5'-cyclic GMP(in) = 3',5'-cyclic GMP(out). It carries out the reaction GMP(in) = GMP(out). It catalyses the reaction 2'-deoxyguanosine(in) = 2'-deoxyguanosine(out). The catalysed reaction is GDP(in) = GDP(out). The enzyme catalyses guanosine(in) = guanosine(out). It carries out the reaction GTP(in) = GTP(out). It catalyses the reaction 3',5'-cyclic AMP(in) = 3',5'-cyclic AMP(out). The catalysed reaction is creatinine(in) = creatinine(out). The enzyme catalyses prostaglandin E2(out) = prostaglandin E2(in). It carries out the reaction 2-oxoglutarate(in) = 2-oxoglutarate(out). It catalyses the reaction glutarate(in) = glutarate(out). The catalysed reaction is urate(out) = urate(in). The enzyme catalyses estrone 3-sulfate(out) = estrone 3-sulfate(in). Functions as a Na(+)-independent bidirectional multispecific transporter. Contributes to the renal and hepatic elimination of endogenous organic compounds from the systemic circulation into the urine and bile, respectively. Capable of transporting a wide range of purine and pyrimidine nucleobases, nucleosides and nucleotides, with cGMP, 2'deoxyguanosine and GMP being the preferred substrates. Functions as a pH- and chloride-independent cGMP bidirectional facilitative transporter that can regulate both intracellular and extracellular levels of cGMP and may be involved in cGMP signaling pathways. Mediates orotate/glutamate bidirectional exchange and most likely display a physiological role in hepatic release of glutamate into the blood. Involved in renal secretion and possible reabsorption of creatinine. Able to uptake prostaglandin E2 (PGE2) and may contribute to PGE2 renal excretion. Also transports alpha-ketoglutarate and urate. Apart from the orotate/glutamate exchange, the counterions for the uptake of other SLC22A7/OAT2 substrates remain to be identified. This is Solute carrier family 22 member 7 (SLC22A7) from Sus scrofa (Pig).